The sequence spans 436 residues: UPF0597 protein YhaM (436 aa).

This sequence belongs to the UPF0597 family.

This Escherichia coli O127:H6 (strain E2348/69 / EPEC) protein is UPF0597 protein YhaM.